The following is a 373-amino-acid chain: Leucine aminopeptidase 1 (373 aa).

The first 18 residues, 1–18, serve as a signal peptide directing secretion; the sequence is MKLLSVLALSATATSVLG. 2 residues coordinate Zn(2+): histidine 176 and aspartate 195. A glycan (N-linked (GlcNAc...) asparagine) is linked at asparagine 196. Zn(2+)-binding residues include glutamate 234 and aspartate 261. The N-linked (GlcNAc...) asparagine glycan is linked to asparagine 288. Cysteines 310 and 314 form a disulfide. Residue histidine 343 participates in Zn(2+) binding. Residue asparagine 348 is glycosylated (N-linked (GlcNAc...) asparagine).

It belongs to the peptidase M28 family. M28E subfamily. Monomer. The cofactor is Zn(2+).

It is found in the secreted. With respect to regulation, activity is inhibited by EDTA, o-phenanthroline, bestatin and amastatin. In terms of biological role, extracellular aminopeptidase which contributes to pathogenicity. The chain is Leucine aminopeptidase 1 (LAP1) from Trichophyton rubrum (Athlete's foot fungus).